The primary structure comprises 423 residues: Galactosylceramide sulfotransferase (423 aa).

Residues 1–14 lie on the Cytoplasmic side of the membrane; sequence MLPPQKKPWESMAK. The helical; Signal-anchor for type II membrane protein transmembrane segment at 15–35 threads the bilayer; sequence GLVLGALFTSFLLLVYSYAVP. Residues 36–423 are Lumenal-facing; it reads PLHAGLASTT…WKFIRDFLRW (388 aa). 2 N-linked (GlcNAc...) asparagine glycosylation sites follow: asparagine 66 and asparagine 312.

The protein belongs to the galactose-3-O-sulfotransferase family. In terms of tissue distribution, expressed in kidney proximal tubule, gastric mucosa and adenocarcinoma. Highly expressed in renal cell carcinoma cell lines.

Its subcellular location is the golgi apparatus membrane. It catalyses the reaction a beta-D-galactosyl-(1&lt;-&gt;1')-N-acylsphing-4-enine + 3'-phosphoadenylyl sulfate = an N-acyl-1-beta-D-(3-O-sulfo)-galactosyl-sphing-4-enine + adenosine 3',5'-bisphosphate + H(+). The catalysed reaction is a 1-O-alkyl-2-acyl-3-O-(beta-D-galactosyl)-sn-glycerol + 3'-phosphoadenylyl sulfate = a 1-O-alkyl-2-acyl-3-(beta-D-3-sulfogalactosyl)-sn-glycerol + adenosine 3',5'-bisphosphate + H(+). The enzyme catalyses a beta-D-Gal-(1&lt;-&gt;1')-ceramide + 3'-phosphoadenylyl sulfate = 1-(3-O-sulfo-beta-D-galactosyl)-ceramide + adenosine 3',5'-bisphosphate + H(+). It carries out the reaction a 1,2-diacyl-3-O-(beta-D-galactosyl)-sn-glycerol + 3'-phosphoadenylyl sulfate = 1,2-diacyl-3-(3-O-sulfo-beta-D-galactosyl)-sn-glycerol + adenosine 3',5'-bisphosphate + H(+). It catalyses the reaction a beta-D-Gal-(1-&gt;4)-beta-D-Glc-(1&lt;-&gt;1)-Cer(d18:1(4E)) + 3'-phosphoadenylyl sulfate = beta-D-3-sulfogalactosyl-(1-&gt;4)-beta-D-glucosyl-(1&lt;-&gt;1')-N-acylsphing-4-enine + adenosine 3',5'-bisphosphate + H(+). It participates in lipid metabolism; sphingolipid metabolism. Catalyzes the transfer of a sulfate group to position 3 of non-reducing beta-galactosyl residues in glycerolipids and sphingolipids, therefore participates in the biosynthesis of sulfoglycolipids. Catalyzes the synthesis of galactosylceramide sulfate (sulfatide), a major lipid component of the myelin sheath and of monogalactosylalkylacylglycerol sulfate (seminolipid), present in spermatocytes. Seems to prefer beta-glycosides at the non-reducing termini of sugar chains attached to a lipid moiety. Also acts on lactosylceramide, galactosyl 1-alkyl-2-sn-glycerol and galactosyl diacylglycerol (in vitro). The polypeptide is Galactosylceramide sulfotransferase (Homo sapiens (Human)).